A 740-amino-acid chain; its full sequence is Probable apyrase 7 (740 aa).

At 1 to 113 the chain is on the cytoplasmic side; sequence MVFGRITELF…PSTRRKLIRA (113 aa). A helical membrane pass occupies residues 114–134; the sequence is VMIVMCLFLFAFLVYIVSMYI. Residues 135 to 581 lie on the Extracellular side of the membrane; that stretch reads YTNWSRGASR…LKSYETLSMK (447 aa). An N-linked (GlcNAc...) asparagine glycan is attached at asparagine 137. 147-157 provides a ligand contact to ATP; that stretch reads VVFDCGSTGTR. Asparagine 208 is a glycosylation site (N-linked (GlcNAc...) asparagine). Glutamate 284 serves as the catalytic Proton acceptor. 309–319 contacts ATP; the sequence is GALDLGGSSLQ. N-linked (GlcNAc...) asparagine glycosylation is found at asparagine 330, asparagine 374, asparagine 439, and asparagine 484. The chain crosses the membrane as a helical span at residues 582–602; it reads INPIALISILILSLLLLLCAL. Residues 603 to 740 are Cytoplasmic-facing; that stretch reads SRVSNCLPRF…SLADSHMLKM (138 aa). Residues 706 to 740 are disordered; it reads FWSSPRRSQMRLQSRRSQSREDLSSSLADSHMLKM. The span at 708–721 shows a compositional bias: low complexity; the sequence is SSPRRSQMRLQSRR.

Belongs to the GDA1/CD39 NTPase family. Ca(2+) is required as a cofactor. Detected in mature pollen grains. Also expressed in more diverse tissues such as roots, leaves, stems, pistils and sepals. More particularly expressed in the vascular bundle.

The protein localises to the membrane. It catalyses the reaction a ribonucleoside 5'-triphosphate + 2 H2O = a ribonucleoside 5'-phosphate + 2 phosphate + 2 H(+). In terms of biological role, catalyzes the hydrolysis of phosphoanhydride bonds of nucleoside tri- and di-phosphates. Involved in the regulation of pollen and anther development. This Arabidopsis thaliana (Mouse-ear cress) protein is Probable apyrase 7 (APY7).